A 303-amino-acid polypeptide reads, in one-letter code: Bidirectional sugar transporter SWEET14 (303 aa).

Residues 1–9 (MAGMSLQHP) lie on the Extracellular side of the membrane. The helical transmembrane segment at 10 to 30 (WAFAFGLLGNIISFMTYLAPL) threads the bilayer. A MtN3/slv 1 domain is found at 13–98 (AFGLLGNIIS…AVYLVYAPKK (86 aa)). Residues 31–44 (PTFYRIYKSKSTQG) lie on the Cytoplasmic side of the membrane. The chain crosses the membrane as a helical span at residues 45–65 (FQSVPYVVALFSAMLWIYYAL). Topologically, residues 66 to 72 (LKSDECL) are extracellular. Residues 73–93 (LITINSAGCVIETIYIAVYLV) traverse the membrane as a helical segment. The Cytoplasmic portion of the chain corresponds to 94–105 (YAPKKAKMFTAK). The helical transmembrane segment at 106-126 (LLLLVNVGVFGLILLLTLLLS) threads the bilayer. Residues 127-133 (AGDRRIV) are Extracellular-facing. A helical transmembrane segment spans residues 134 to 154 (VLGWVCVGFSVSVFVAPLSII). A MtN3/slv 2 domain is found at 134-217 (VLGWVCVGFS…MGLYAMYRNS (84 aa)). Residues 155 to 167 (RLVVRTKSVEFMP) lie on the Cytoplasmic side of the membrane. A helical transmembrane segment spans residues 168–188 (FSLSFSLTISAVVWFLYGLLI). The Extracellular portion of the chain corresponds to 189 to 192 (KDKY). The chain crosses the membrane as a helical span at residues 193–213 (VALPNVLGFSFGVIQMGLYAM). Topologically, residues 214 to 303 (YRNSTPKAVL…AGAGEKKVAA (90 aa)) are cytoplasmic. The disordered stretch occupies residues 266 to 290 (HPVDVESPPAEAPPQEDDKAAAATA).

Belongs to the SWEET sugar transporter family. Forms homooligomers and/or heterooligomers.

It localises to the cell membrane. In terms of biological role, mediates both low-affinity uptake and efflux of sugar across the plasma membrane. The polypeptide is Bidirectional sugar transporter SWEET14 (SWEET14) (Oryza sativa subsp. indica (Rice)).